The primary structure comprises 234 residues: Transmembrane protein 65 (234 aa).

The transit peptide at 1 to 55 (MSRLLPLLGSRTARSLRPGPAAAPRLPSWCCCGRGLLALGVPGGPRLLGTHPKKE) directs the protein to the mitochondrion. The Cytoplasmic portion of the chain corresponds to 56–110 (PMEALNTAQGARDFIYSLHSTERSCLLKELHRFESIAIAQEKLEALPPTPGQLRY). A helical transmembrane segment spans residues 111–131 (VFFHNAIPFVGFGFLDNAIMI). Residues 132–138 (VAGTQIE) are Extracellular-facing. Residues 139-159 (LSIGIILGISTMAAAALGNLV) traverse the membrane as a helical segment. The Cytoplasmic portion of the chain corresponds to 160 to 203 (SDLAGLGLAGYVEALASRLGLSIPDLTPKQVDMWQTRVSTHLGK). The chain crosses the membrane as a helical span at residues 204 to 224 (AVGVTIGCILGMFPLIFFGGS). The Extracellular segment spans residues 225–234 (EEDEKLETTN).

In terms of assembly, monomer. Homodimer. Interacts with GJA1. Interacts weakly with DSP. Interacts with SCN1B. As to expression, predominantly expressed in the ventricular tissue (at protein level).

The protein localises to the cell membrane. The protein resides in the mitochondrion inner membrane. Essential for maintaining proper cardiac intercalated disk (ICD) structure and function as well as cardiac conduction velocity in the heart. Its association with SCN1B is required for stabilizing the perinexus in the ICD and for localization of GJA1 and SCN5A to the ICD. May regulate the function of the gap junction protein GJA1 and may contribute to the stability and proper localization of GJA1 to cardiac intercalated disk thereby regulating gap junction communication. Regulates mitochondrial respiration and mitochondrial DNA copy number maintenance. The polypeptide is Transmembrane protein 65 (Tmem65) (Mus musculus (Mouse)).